A 370-amino-acid chain; its full sequence is Vasopressin V2 receptor (370 aa).

Polar residues predominate over residues 1 to 10 (MLLASTTSAV). The disordered stretch occupies residues 1 to 26 (MLLASTTSAVPRTLSPPTPAGNGSRE). Residues 1–37 (MLLASTTSAVPRTLSPPTPAGNGSRELLDTRDPLLVQ) are Extracellular-facing. Asn22 carries an N-linked (GlcNAc...) asparagine glycan. A helical transmembrane segment spans residues 38–62 (AELALLSTVFVAVALSNGLVLGALA). The Cytoplasmic segment spans residues 63–76 (RRVRRGRWAPMHVF). Residues 77-97 (IGHLCLADLAVALFQVLPQLA) traverse the membrane as a helical segment. Residues 98–112 (WDATDRFRGPDALCR) are Extracellular-facing. The chain crosses the membrane as a helical span at residues 113–134 (AVKYLQMVGMYASSYMILAMTL). The Cytoplasmic portion of the chain corresponds to 135 to 158 (DRHRAICRPMLAYRHGGGARWNRP). Residues 159–179 (VLVAWAFSLILSLPQLFIFAQ) form a helical membrane-spanning segment. The Extracellular portion of the chain corresponds to 180 to 199 (RDVGNGSGVLDCWAHFAEPW). The chain crosses the membrane as a helical span at residues 200-219 (GLRAYVTWIALMVFVAPALG). Topologically, residues 220-270 (IAACQVLIFREIHSSLVPGPAERAGGCRGGHRTGSPSEGARVSAAMAKTVR) are cytoplasmic. The chain crosses the membrane as a helical span at residues 271 to 292 (MTLVIVIVYVLCWAPFFLVQLW). At 293–307 (AAWDPQAPLEGAPFV) the chain is on the extracellular side. Residues 308 to 327 (LLMLLASLNSCTNPWIYAFF) traverse the membrane as a helical segment. Residues 328–370 (SSSVSSELRSLFCWARSRAPPSLGPQEESCATASSFLAKDTSS) lie on the Cytoplasmic side of the membrane. Cys340 is lipidated: S-palmitoyl cysteine.

Belongs to the G-protein coupled receptor 1 family. Vasopressin/oxytocin receptor subfamily. As to quaternary structure, interacts with ARRDC4. Identified in a complex containing at least ARRDC4, V2R and HGS. Interacts with TMEM147.

It is found in the cell membrane. Its function is as follows. Receptor for arginine vasopressin. The activity of this receptor is mediated by G proteins which activate adenylate cyclase. Involved in renal water reabsorption. The polypeptide is Vasopressin V2 receptor (AVPR2) (Canis lupus familiaris (Dog)).